A 418-amino-acid polypeptide reads, in one-letter code: Histidine--tRNA ligase (418 aa).

It belongs to the class-II aminoacyl-tRNA synthetase family. Homodimer.

It localises to the cytoplasm. The enzyme catalyses tRNA(His) + L-histidine + ATP = L-histidyl-tRNA(His) + AMP + diphosphate + H(+). The sequence is that of Histidine--tRNA ligase from Thermosipho africanus (strain TCF52B).